We begin with the raw amino-acid sequence, 641 residues long: MMNLSRRTLLTTGSAATLAYALGMAGSAQAATAVTARPGVPVTAAPPLRLASRNSVFTRSGAGPRYWNIYGYSFPHNAPIPENEWKANIDWLAGNFADFGYDIACTDGWIEGSSRTTGNGYITSYNDSWQHDWAYWANYLAARKMKLGVYYNPLWVHRAAVEDASKTVLGRPDVKIADLVVPGDFFARDIGGNQLYWLDVTKSGAKEYVQGYVRYFKDLGVPYLRIDFLSWYEDGRDANIGQVNAPHGRANYELALSWINEAAGEDMEVSLVMPHMFQDGSAELANGDLVRINADADKGGWDRLSGMRQNWQDAWPNWANPFCGFTGWSHRNGRGQLILDGDFMRASTFASDEERKTMMNLMVAAGSPLAIADTYQQIGNNAWVYTNKEVLQLNADGLVGKPLYRSATPFSKDPGSRDTERWAGQLPDGSWGVALFNRSDTETVTKTIDFAKDLGLATGGNVRDLWEHRNLGMDSRATAALAPHASAIFRVTPPKMHGTTRYPAAFAAWGGGAGFNNNHPGYDGNGFVDGLQAGSGSADPLVTFAVQVPHRAATPSGYRYANATDDNTTSKTTTKKANPEKADRSTVDGPVHVSFPGLATWDTWGVAAGTITLDAGLNLVTIGRGATDKGAINLNWIELDM.

The tat-type signal signal peptide spans 1–39 (MMNLSRRTLLTTGSAATLAYALGMAGSAQAATAVTARPG). The active-site Nucleophile is aspartate 227. The active-site Proton donor is aspartate 288. Residues 500–640 (TRYPAAFAAW…AINLNWIELD (141 aa)) form the CBM6 domain. A disordered region spans residues 556–588 (SGYRYANATDDNTTSKTTTKKANPEKADRSTVD). The segment covering 561–576 (ANATDDNTTSKTTTKK) has biased composition (low complexity). Residues 577 to 586 (ANPEKADRST) show a composition bias toward basic and acidic residues.

This sequence belongs to the glycosyl hydrolase 27 family. In terms of processing, predicted to be exported by the Tat system. The position of the signal peptide cleavage has been experimentally proven.

Its subcellular location is the secreted. The enzyme catalyses Hydrolysis of (1-&gt;6)-alpha-D-glucosidic linkages in polysaccharides, to remove successive isomaltose units from the non-reducing ends of the chains.. The chain is Isomalto-dextranase (imd) from Arthrobacter globiformis.